A 1332-amino-acid chain; its full sequence is DNA-directed RNA polymerase subunit beta' (1332 aa).

Zn(2+) contacts are provided by Cys60, Cys62, Cys75, and Cys78. Mg(2+) is bound by residues Asp535, Asp537, and Asp539. Cys894, Cys977, Cys984, and Cys987 together coordinate Zn(2+).

It belongs to the RNA polymerase beta' chain family. The RNAP catalytic core consists of 2 alpha, 1 beta, 1 beta' and 1 omega subunit. When a sigma factor is associated with the core the holoenzyme is formed, which can initiate transcription. Mg(2+) is required as a cofactor. Zn(2+) serves as cofactor.

The enzyme catalyses RNA(n) + a ribonucleoside 5'-triphosphate = RNA(n+1) + diphosphate. DNA-dependent RNA polymerase catalyzes the transcription of DNA into RNA using the four ribonucleoside triphosphates as substrates. This chain is DNA-directed RNA polymerase subunit beta', found in Corynebacterium kroppenstedtii (strain DSM 44385 / JCM 11950 / CIP 105744 / CCUG 35717).